We begin with the raw amino-acid sequence, 207 residues long: Guanylate kinase (207 aa).

Residues 4–184 (GTLYIVSAPS…ALMDFKAIIR (181 aa)) form the Guanylate kinase-like domain. Residue 11-18 (APSGAGKS) participates in ATP binding.

The protein belongs to the guanylate kinase family.

The protein resides in the cytoplasm. The catalysed reaction is GMP + ATP = GDP + ADP. It carries out the reaction dZMP + ATP = dZDP + ADP. The protein operates within purine metabolism. Its function is as follows. Essential for recycling GMP and indirectly, cGMP. In terms of biological role, (Microbial infection) Catalyzes the phosphorylation of dZMP to dZDP, when the bacterium is infected by a phage that produces the substrate for the synthesis of dZTP (2- amino-2'-deoxyadenosine 5'-triphosphate), which is then used by the phage as a DNA polymerase substrate. In Vibrio cholerae serotype O1 (strain ATCC 39315 / El Tor Inaba N16961), this protein is Guanylate kinase (gmk).